A 34-amino-acid polypeptide reads, in one-letter code: Protein MgtT (34 aa).

The interval 1–34 (MNGDNPSPNRPLVTVVYKGPDFYDGEKKPPVNRR) is disordered. Basic and acidic residues predominate over residues 24-34 (DGEKKPPVNRR).

In Escherichia coli (strain K12), this protein is Protein MgtT.